The sequence spans 247 residues: tRNA pseudouridine synthase A (247 aa).

The active-site Nucleophile is the Asp-53. Tyr-111 is a binding site for substrate.

Belongs to the tRNA pseudouridine synthase TruA family. Homodimer.

The catalysed reaction is uridine(38/39/40) in tRNA = pseudouridine(38/39/40) in tRNA. Its function is as follows. Formation of pseudouridine at positions 38, 39 and 40 in the anticodon stem and loop of transfer RNAs. This is tRNA pseudouridine synthase A from Lacticaseibacillus casei (strain BL23) (Lactobacillus casei).